The chain runs to 557 residues: Dihydroxy-acid dehydratase 2 (557 aa).

Cysteine 50 provides a ligand contact to [2Fe-2S] cluster. Mg(2+) is bound at residue aspartate 82. Residue cysteine 123 coordinates [2Fe-2S] cluster. Residues aspartate 124 and lysine 125 each coordinate Mg(2+). N6-carboxylysine is present on lysine 125. Cysteine 195 serves as a coordination point for [2Fe-2S] cluster. Position 447 (glutamate 447) interacts with Mg(2+). Serine 473 serves as the catalytic Proton acceptor.

It belongs to the IlvD/Edd family. In terms of assembly, homodimer. Requires [2Fe-2S] cluster as cofactor. It depends on Mg(2+) as a cofactor.

It carries out the reaction (2R)-2,3-dihydroxy-3-methylbutanoate = 3-methyl-2-oxobutanoate + H2O. The catalysed reaction is (2R,3R)-2,3-dihydroxy-3-methylpentanoate = (S)-3-methyl-2-oxopentanoate + H2O. It participates in amino-acid biosynthesis; L-isoleucine biosynthesis; L-isoleucine from 2-oxobutanoate: step 3/4. The protein operates within amino-acid biosynthesis; L-valine biosynthesis; L-valine from pyruvate: step 3/4. Its function is as follows. Functions in the biosynthesis of branched-chain amino acids. Catalyzes the dehydration of (2R,3R)-2,3-dihydroxy-3-methylpentanoate (2,3-dihydroxy-3-methylvalerate) into 2-oxo-3-methylpentanoate (2-oxo-3-methylvalerate) and of (2R)-2,3-dihydroxy-3-methylbutanoate (2,3-dihydroxyisovalerate) into 2-oxo-3-methylbutanoate (2-oxoisovalerate), the penultimate precursor to L-isoleucine and L-valine, respectively. In Burkholderia lata (strain ATCC 17760 / DSM 23089 / LMG 22485 / NCIMB 9086 / R18194 / 383), this protein is Dihydroxy-acid dehydratase 2.